The primary structure comprises 382 residues: ATP phosphoribosyltransferase regulatory subunit (382 aa).

Belongs to the class-II aminoacyl-tRNA synthetase family. HisZ subfamily. As to quaternary structure, heteromultimer composed of HisG and HisZ subunits.

The protein resides in the cytoplasm. Its pathway is amino-acid biosynthesis; L-histidine biosynthesis; L-histidine from 5-phospho-alpha-D-ribose 1-diphosphate: step 1/9. Its function is as follows. Required for the first step of histidine biosynthesis. May allow the feedback regulation of ATP phosphoribosyltransferase activity by histidine. The polypeptide is ATP phosphoribosyltransferase regulatory subunit (Burkholderia ambifaria (strain ATCC BAA-244 / DSM 16087 / CCUG 44356 / LMG 19182 / AMMD) (Burkholderia cepacia (strain AMMD))).